Here is a 394-residue protein sequence, read N- to C-terminus: 1-deoxy-D-xylulose 5-phosphate reductoisomerase (394 aa).

The NADPH site is built by T10, G11, S12, I13, G38, R39, N40, and N123. Position 124 (K124) interacts with 1-deoxy-D-xylulose 5-phosphate. E125 contacts NADPH. D149 contacts Mn(2+). 1-deoxy-D-xylulose 5-phosphate is bound by residues S150, E151, S175, and H198. E151 is a Mn(2+) binding site. G204 is a binding site for NADPH. 1-deoxy-D-xylulose 5-phosphate is bound by residues S211, N216, K217, and E220. Mn(2+) is bound at residue E220.

Belongs to the DXR family. The cofactor is Mg(2+). It depends on Mn(2+) as a cofactor.

The catalysed reaction is 2-C-methyl-D-erythritol 4-phosphate + NADP(+) = 1-deoxy-D-xylulose 5-phosphate + NADPH + H(+). It participates in isoprenoid biosynthesis; isopentenyl diphosphate biosynthesis via DXP pathway; isopentenyl diphosphate from 1-deoxy-D-xylulose 5-phosphate: step 1/6. Functionally, catalyzes the NADPH-dependent rearrangement and reduction of 1-deoxy-D-xylulose-5-phosphate (DXP) to 2-C-methyl-D-erythritol 4-phosphate (MEP). This is 1-deoxy-D-xylulose 5-phosphate reductoisomerase from Cereibacter sphaeroides (strain ATCC 17023 / DSM 158 / JCM 6121 / CCUG 31486 / LMG 2827 / NBRC 12203 / NCIMB 8253 / ATH 2.4.1.) (Rhodobacter sphaeroides).